The sequence spans 343 residues: Aspartate carbamoyltransferase catalytic subunit (343 aa).

Carbamoyl phosphate contacts are provided by Arg91 and Thr92. Lys119 contacts L-aspartate. Arg141, His171, and Gln174 together coordinate carbamoyl phosphate. L-aspartate is bound by residues Arg204 and Arg259. Carbamoyl phosphate is bound by residues Gly300 and Pro301.

It belongs to the aspartate/ornithine carbamoyltransferase superfamily. ATCase family. In terms of assembly, heterododecamer (2C3:3R2) of six catalytic PyrB chains organized as two trimers (C3), and six regulatory PyrI chains organized as three dimers (R2).

It catalyses the reaction carbamoyl phosphate + L-aspartate = N-carbamoyl-L-aspartate + phosphate + H(+). It functions in the pathway pyrimidine metabolism; UMP biosynthesis via de novo pathway; (S)-dihydroorotate from bicarbonate: step 2/3. In terms of biological role, catalyzes the condensation of carbamoyl phosphate and aspartate to form carbamoyl aspartate and inorganic phosphate, the committed step in the de novo pyrimidine nucleotide biosynthesis pathway. In Burkholderia vietnamiensis (strain G4 / LMG 22486) (Burkholderia cepacia (strain R1808)), this protein is Aspartate carbamoyltransferase catalytic subunit.